Consider the following 285-residue polypeptide: Catechol-2,3-dioxygenase (285 aa).

2 consecutive VOC domains span residues 9-126 (HIGY…MYAD) and 169-285 (IIGH…TFVI). Residues His213 and Glu264 each coordinate Fe cation.

Belongs to the extradiol ring-cleavage dioxygenase family. Requires Fe(2+) as cofactor.

The catalysed reaction is catechol + O2 = (2Z,4E)-2-hydroxy-6-oxohexa-2,4-dienoate + H(+). Functionally, involved in the meta cleavage of catechol to 2-hydroxymuconic semialdehyde. Essential for growth and viability in the presence of catechol and probably involved in the detoxification of catechol. The sequence is that of Catechol-2,3-dioxygenase (catE) from Bacillus subtilis (strain 168).